Consider the following 96-residue polypeptide: Aspartyl/glutamyl-tRNA(Asn/Gln) amidotransferase subunit C (96 aa).

This sequence belongs to the GatC family. Heterotrimer of A, B and C subunits.

It catalyses the reaction L-glutamyl-tRNA(Gln) + L-glutamine + ATP + H2O = L-glutaminyl-tRNA(Gln) + L-glutamate + ADP + phosphate + H(+). The catalysed reaction is L-aspartyl-tRNA(Asn) + L-glutamine + ATP + H2O = L-asparaginyl-tRNA(Asn) + L-glutamate + ADP + phosphate + 2 H(+). Its function is as follows. Allows the formation of correctly charged Asn-tRNA(Asn) or Gln-tRNA(Gln) through the transamidation of misacylated Asp-tRNA(Asn) or Glu-tRNA(Gln) in organisms which lack either or both of asparaginyl-tRNA or glutaminyl-tRNA synthetases. The reaction takes place in the presence of glutamine and ATP through an activated phospho-Asp-tRNA(Asn) or phospho-Glu-tRNA(Gln). This Neisseria gonorrhoeae (strain ATCC 700825 / FA 1090) protein is Aspartyl/glutamyl-tRNA(Asn/Gln) amidotransferase subunit C.